Here is a 198-residue protein sequence, read N- to C-terminus: MHYPEPISKLIDSFMKLPGIGPKTAQRLAFHTLDMKEDDVVQFAKALVDVKRELTYCSVCGHITENDPCYICEDKQRDRSVICVVEDDKDVIAMEKMREYKGLYHVLHGSISPMDGIGPEDINIPSLIERLKSDEVSELILAMNPNLEGESTAMYISRLVKPIGIKVTRLAQGLSVGGDLEYADEVTLSKAIAGRTEM.

The C4-type zinc finger occupies 57–72 (CSVCGHITENDPCYIC). The Toprim domain occupies 80-175 (SVICVVEDDK…KVTRLAQGLS (96 aa)).

Belongs to the RecR family.

Its function is as follows. May play a role in DNA repair. It seems to be involved in an RecBC-independent recombinational process of DNA repair. It may act with RecF and RecO. This is Recombination protein RecR from Staphylococcus aureus (strain JH1).